A 100-amino-acid polypeptide reads, in one-letter code: uncharacterized protein (100 aa).

Basic and acidic residues predominate over residues 68 to 91; that stretch reads EQYASGAGEKRKEQSSGNSRRKDP. The disordered stretch occupies residues 68–100; the sequence is EQYASGAGEKRKEQSSGNSRRKDPSLYNWSDVK.

This sequence belongs to the chlamydial CPn_0121/CT_031/TC_0300 family.

This is an uncharacterized protein from Chlamydia muridarum (strain MoPn / Nigg).